Reading from the N-terminus, the 236-residue chain is Penton protein H240R (236 aa).

The protein belongs to the asfivirus H240R family.

It localises to the virion. Forms the penton at the fivefold vertices of the icosahedral capsid. Together with the minor capsid proteins (p17, p49, and M1249L), forms a complicated network immediately below the outer capsid shell, stabilizing the whole capsid. This chain is Penton protein H240R, found in African swine fever virus (isolate Warthog/Namibia/Wart80/1980) (ASFV).